A 267-amino-acid polypeptide reads, in one-letter code: NAD kinase 2 (267 aa).

The active-site Proton acceptor is the Asp-52. Residues 52 to 53, 124 to 125, Arg-151, Asp-153, 164 to 169, and Ala-188 contribute to the NAD(+) site; these read DA, NE, and TAYNKS.

It belongs to the NAD kinase family. The cofactor is a divalent metal cation.

It localises to the cytoplasm. The enzyme catalyses NAD(+) + ATP = ADP + NADP(+) + H(+). Its function is as follows. Involved in the regulation of the intracellular balance of NAD and NADP, and is a key enzyme in the biosynthesis of NADP. Catalyzes specifically the phosphorylation on 2'-hydroxyl of the adenosine moiety of NAD to yield NADP. This is NAD kinase 2 from Bacillus cereus (strain ATCC 14579 / DSM 31 / CCUG 7414 / JCM 2152 / NBRC 15305 / NCIMB 9373 / NCTC 2599 / NRRL B-3711).